Here is a 152-residue protein sequence, read N- to C-terminus: Deoxyuridine 5'-triphosphate nucleotidohydrolase (152 aa).

Residues R72–G74, N85, and T89–D91 contribute to the substrate site.

Belongs to the dUTPase family. Mg(2+) serves as cofactor.

The catalysed reaction is dUTP + H2O = dUMP + diphosphate + H(+). It participates in pyrimidine metabolism; dUMP biosynthesis; dUMP from dCTP (dUTP route): step 2/2. Functionally, this enzyme is involved in nucleotide metabolism: it produces dUMP, the immediate precursor of thymidine nucleotides and it decreases the intracellular concentration of dUTP so that uracil cannot be incorporated into DNA. The polypeptide is Deoxyuridine 5'-triphosphate nucleotidohydrolase (Bradyrhizobium sp. (strain ORS 278)).